The sequence spans 251 residues: Aspartate/glutamate leucyltransferase (251 aa).

It belongs to the R-transferase family. Bpt subfamily.

It localises to the cytoplasm. The catalysed reaction is N-terminal L-glutamyl-[protein] + L-leucyl-tRNA(Leu) = N-terminal L-leucyl-L-glutamyl-[protein] + tRNA(Leu) + H(+). It catalyses the reaction N-terminal L-aspartyl-[protein] + L-leucyl-tRNA(Leu) = N-terminal L-leucyl-L-aspartyl-[protein] + tRNA(Leu) + H(+). Functions in the N-end rule pathway of protein degradation where it conjugates Leu from its aminoacyl-tRNA to the N-termini of proteins containing an N-terminal aspartate or glutamate. This is Aspartate/glutamate leucyltransferase from Xanthomonas euvesicatoria pv. vesicatoria (strain 85-10) (Xanthomonas campestris pv. vesicatoria).